The sequence spans 948 residues: MEEKEILRRQIRLLQGLIDDYKTLHGNAPAPGTPAASGWQPPTYHSGRAFSARYPRPSRRGYSSHHGPSWRKKYSLVNRPPGPSDPPADHAVRPLHGARGGQPPVPQQHVLERQVQLSQGQNVVIKVKPPSKSGSASASGAQRGSLEEFEETPWSDQRPREGEGEPPRGQLQPSRPTRARGTCSVEDPLLVCQKEPGKPRMVKSVGSVGDSPREPRRTVSESVIAVKASFPSSALPPRTGVALGRKLGSHSVASCAPQLLGDRRVDAGHTDQPVPSGSVGGPARPASGPRQAREASLVVTCRTNKFRKNNYKWVAASSKSPRVARRALSPRVAAENVCKASAGMANKVEKPQLIADPEPKPRKPATSSKPGSAPSKYKWKASSPSASSSSSFRWQSEASSKDHASQLSPVLSRSPSGDRPAVGHSGLKPLSGETPLSAYKVKSRTKIIRRRSSTSLPGDKKSGTSPAATAKSHLSLRRRQALRGKSSPVLKKTPNKGLVQVTTHRLCRLPPSRAHLPTKEASSLHAVRTAPTSKVIKTRYRIVKKTPASPLSAPPFPLSLPSWRARRLSLSRSLVLNRLRPVASGGGKAQPGSPWWRSKGYRCIGGVLYKVSANKLSKTSGQPSDAGSRPLLRTGRLDPAGSCSRSLASRAVQRSLAIIRQARQRREKRKEYCMYYNRFGRCNRGERCPYIHDPEKVAVCTRFVRGTCKKTDGTCPFSHHVSKEKMPVCSYFLKGICSNSNCPYSHVYVSRKAEVCSDFLKGYCPLGAKCKKKHTLLCPDFARRGACPRGAQCQLLHRTQKRHSRRAATSPAPGPSDATARSRVSASHGPRKPSASQRPTRQTPSSAALTAAAVAAPPHCPGGSASPSSSKASSSSSSSSSPPASLDHEAPSLQEAALAAACSNRLCKLPSFISLQSSPSPGAQPRVRAPRAPLTKDSGKPLHIKPRL.

Disordered regions lie at residues 25–108 (HGNA…VPQQ), 121–219 (QNVV…RRTV), 265–296 (VDAG…REAS), and 336–493 (NVCK…LKKT). Positions 56 to 74 (RPSRRGYSSHHGPSWRKKY) are enriched in basic residues. The span at 128-141 (KPPSKSGSASASGA) shows a compositional bias: low complexity. Residues 157-166 (QRPREGEGEP) are compositionally biased toward basic and acidic residues. Over residues 372 to 398 (SAPSKYKWKASSPSASSSSSFRWQSEA) the composition is skewed to low complexity. The segment covering 405-415 (SQLSPVLSRSP) has biased composition (polar residues). Ser-408 carries the post-translational modification Phosphoserine. The span at 441–452 (VKSRTKIIRRRS) shows a compositional bias: basic residues. 5 C3H1-type zinc fingers span residues 667–695 (EKRK…HDPE), 699–722 (VCTR…HHVS), 723–749 (KEKM…HVYV), 750–777 (SRKA…HTLL), and 778–800 (CPDF…HRTQ). Disordered stretches follow at residues 798-891 (RTQK…HEAP) and 913-948 (ISLQ…KPRL). Polar residues predominate over residues 834 to 846 (SASQRPTRQTPSS). Composition is skewed to low complexity over residues 847–856 (AALTAAAVAA) and 864–885 (SASP…PPAS). Phosphoserine occurs at positions 918 and 920.

As to quaternary structure, interacts with SMAD1, SMAD3, SMAD4, CPSF2 and CPSF3.

It localises to the nucleus. Required for the export of polyadenylated mRNAs from the nucleus. Enhances ACVR1B-induced SMAD-dependent transcription. Binds to single-stranded DNA but not to double-stranded DNA in vitro. Involved in RNA cleavage. The chain is Zinc finger CCCH domain-containing protein 3 (ZC3H3) from Homo sapiens (Human).